Consider the following 392-residue polypeptide: UPF0229 protein CPF_1540 (392 aa).

The interval 75–100 (VTTGTGEERRGDRISSDKRKAISNNK) is disordered. Basic and acidic residues predominate over residues 80-94 (GEERRGDRISSDKRK).

Belongs to the UPF0229 family.

In Clostridium perfringens (strain ATCC 13124 / DSM 756 / JCM 1290 / NCIMB 6125 / NCTC 8237 / Type A), this protein is UPF0229 protein CPF_1540.